The following is a 267-amino-acid chain: Undecaprenyl-diphosphatase (267 aa).

7 helical membrane-spanning segments follow: residues proline 39–phenylalanine 59, valine 87–leucine 107, phenylalanine 112–valine 132, valine 145–valine 165, proline 183–valine 203, leucine 216–leucine 236, and serine 244–alanine 264.

It belongs to the UppP family.

It is found in the cell inner membrane. The catalysed reaction is di-trans,octa-cis-undecaprenyl diphosphate + H2O = di-trans,octa-cis-undecaprenyl phosphate + phosphate + H(+). Its function is as follows. Catalyzes the dephosphorylation of undecaprenyl diphosphate (UPP). Confers resistance to bacitracin. This is Undecaprenyl-diphosphatase from Gemmatimonas aurantiaca (strain DSM 14586 / JCM 11422 / NBRC 100505 / T-27).